The following is a 393-amino-acid chain: NAD(P)H-quinone oxidoreductase subunit H, chloroplastic (393 aa).

The protein belongs to the complex I 49 kDa subunit family. As to quaternary structure, NDH is composed of at least 16 different subunits, 5 of which are encoded in the nucleus.

The protein resides in the plastid. Its subcellular location is the chloroplast thylakoid membrane. The catalysed reaction is a plastoquinone + NADH + (n+1) H(+)(in) = a plastoquinol + NAD(+) + n H(+)(out). It carries out the reaction a plastoquinone + NADPH + (n+1) H(+)(in) = a plastoquinol + NADP(+) + n H(+)(out). In terms of biological role, NDH shuttles electrons from NAD(P)H:plastoquinone, via FMN and iron-sulfur (Fe-S) centers, to quinones in the photosynthetic chain and possibly in a chloroplast respiratory chain. The immediate electron acceptor for the enzyme in this species is believed to be plastoquinone. Couples the redox reaction to proton translocation, and thus conserves the redox energy in a proton gradient. This is NAD(P)H-quinone oxidoreductase subunit H, chloroplastic from Draba nemorosa (Woodland whitlowgrass).